We begin with the raw amino-acid sequence, 161 residues long: Endoribonuclease YbeY (161 aa).

Histidine 121, histidine 125, and histidine 131 together coordinate Zn(2+).

This sequence belongs to the endoribonuclease YbeY family. It depends on Zn(2+) as a cofactor.

The protein localises to the cytoplasm. Functionally, single strand-specific metallo-endoribonuclease involved in late-stage 70S ribosome quality control and in maturation of the 3' terminus of the 16S rRNA. This Xanthomonas campestris pv. campestris (strain 8004) protein is Endoribonuclease YbeY.